The primary structure comprises 85 residues: DNA-directed RNA polymerase subunit Rpo11 (85 aa).

It belongs to the archaeal Rpo11/eukaryotic RPB11/RPC19 RNA polymerase subunit family. As to quaternary structure, part of the RNA polymerase complex.

The protein resides in the cytoplasm. The catalysed reaction is RNA(n) + a ribonucleoside 5'-triphosphate = RNA(n+1) + diphosphate. In terms of biological role, DNA-dependent RNA polymerase (RNAP) catalyzes the transcription of DNA into RNA using the four ribonucleoside triphosphates as substrates. This is DNA-directed RNA polymerase subunit Rpo11 from Methanothermobacter thermautotrophicus (strain ATCC 29096 / DSM 1053 / JCM 10044 / NBRC 100330 / Delta H) (Methanobacterium thermoautotrophicum).